We begin with the raw amino-acid sequence, 802 residues long: MEKLYCGMPLLLLVLLLASIDGSTQLQSSQSQTLLRLQQLLYYPKVLNSWNNYTDFCNSEPSPSLTVVCYEDSVTQLHIIGDNGTHMLPKSFSINSFVTTLVKLPDVKVLTFVSLGLWGWLPQKINRLSSLEILNVSSNFLFGPIPHELSSLATLQTLILDENMFSGELPDWIDSLPSLAVLSLRKNVLNGSLPSSLSSLSGLRVLALANNRFNGALPDLSHLTNLQVLDLEGNSFGPLFPRLSNKLVTLILSKNKFRSAVSAEEVSSLYQLQHLDLSYNTFVGPFPTSLMSLPAITYLNISHNKLTGRLSANLSCNSQLMFVDMSSNLLTGSLPTCLKPSSGTSRDVVYASNCLATTNEDQRPVSFCSNEALAVGILPQRRNKVSKVGIALGVTASILGVLLLAGALFVVLRRLNAKKTVTKSSPRLIRENASMGYTSKLLSDARYISQTMKLGGLGLPAYRTFSLEELEYATNNFESSAFMGEGSQGQIYRGRLKDGSFVAIRCLKMKKSCSTQNLMHHIELIAKLRHRHLVSVLGHCFECYLDDSTVSRMFFVFEYVPNGELRTWISDGHMGRLLTWEQRISVAIGVAKGIQFLHTGIVPGVYDNNLKMTDILLDNNLAAKLSSYNLPLLVEGLGKVGQVGSRSGPKGTPSIKDEDKIDIYDFGVILLELIVGRPLRAKSQVDVLKEQLQASISADDGARRSMVDPTVHRACSDQSLKTMMEICVRCLLKDPLERPSIEDVLWNLQFASQVQEGWLQNSNPSSNLGSPSPAASSLPPPSRLHVTTLESPRDSGCEEHER.

The N-terminal stretch at 1–26 (MEKLYCGMPLLLLVLLLASIDGSTQL) is a signal peptide. Topologically, residues 27–391 (QSSQSQTLLR…RNKVSKVGIA (365 aa)) are extracellular. Asn52 and Asn83 each carry an N-linked (GlcNAc...) asparagine glycan. LRR repeat units lie at residues 71 to 94 (EDSV…SFSI), 104 to 128 (LPDV…INRL), 129 to 152 (SSLE…LSSL), 153 to 176 (ATLQ…IDSL), 177 to 200 (PSLA…LSSL), 201 to 225 (SGLR…HLTN), 227 to 244 (QVLD…PRLS), 245 to 268 (NKLV…EVSS), 269 to 293 (LYQL…LMSL), 294 to 317 (PAIT…LSCN), and 319 to 341 (QLMF…LKPS). Asn135 carries an N-linked (GlcNAc...) asparagine glycan. Asn190 carries an N-linked (GlcNAc...) asparagine glycan. N-linked (GlcNAc...) asparagine glycans are attached at residues Asn300 and Asn313. The chain crosses the membrane as a helical span at residues 392–412 (LGVTASILGVLLLAGALFVVL). Residues 413–802 (RRLNAKKTVT…RDSGCEEHER (390 aa)) are Cytoplasmic-facing. The 283-residue stretch at 477–759 (FESSAFMGEG…FASQVQEGWL (283 aa)) folds into the Protein kinase domain. The interval 761–802 (NSNPSSNLGSPSPAASSLPPPSRLHVTTLESPRDSGCEEHER) is disordered. A compositionally biased stretch (low complexity) spans 762-777 (SNPSSNLGSPSPAASS). The span at 791–802 (SPRDSGCEEHER) shows a compositional bias: basic and acidic residues.

This sequence belongs to the protein kinase superfamily. Ser/Thr protein kinase family.

It is found in the cell membrane. In Arabidopsis thaliana (Mouse-ear cress), this protein is Probable inactive leucine-rich repeat receptor-like protein kinase At3g03770.